The sequence spans 160 residues: Lipoprotein signal peptidase (160 aa).

A run of 3 helical transmembrane segments spans residues 7-27 (VIYY…KWLV), 61-81 (GQFW…IIYI), and 91-111 (AGIG…DRVF). Catalysis depends on residues aspartate 117 and aspartate 135. A helical membrane pass occupies residues 133 to 153 (IADSALTVGVILLFIHMFFFA).

This sequence belongs to the peptidase A8 family.

It localises to the cell membrane. The catalysed reaction is Release of signal peptides from bacterial membrane prolipoproteins. Hydrolyzes -Xaa-Yaa-Zaa-|-(S,diacylglyceryl)Cys-, in which Xaa is hydrophobic (preferably Leu), and Yaa (Ala or Ser) and Zaa (Gly or Ala) have small, neutral side chains.. It participates in protein modification; lipoprotein biosynthesis (signal peptide cleavage). Functionally, this protein specifically catalyzes the removal of signal peptides from prolipoproteins. This is Lipoprotein signal peptidase from Geobacillus thermodenitrificans (strain NG80-2).